A 336-amino-acid chain; its full sequence is tRNA N6-adenosine threonylcarbamoyltransferase (336 aa).

Residues histidine 112 and histidine 116 each coordinate Fe cation. Residues 136–140 (LVSGG), aspartate 169, glycine 182, and asparagine 276 each bind substrate. Aspartate 304 lines the Fe cation pocket.

The protein belongs to the KAE1 / TsaD family. Requires Fe(2+) as cofactor.

The protein resides in the cytoplasm. The enzyme catalyses L-threonylcarbamoyladenylate + adenosine(37) in tRNA = N(6)-L-threonylcarbamoyladenosine(37) in tRNA + AMP + H(+). Functionally, required for the formation of a threonylcarbamoyl group on adenosine at position 37 (t(6)A37) in tRNAs that read codons beginning with adenine. Is involved in the transfer of the threonylcarbamoyl moiety of threonylcarbamoyl-AMP (TC-AMP) to the N6 group of A37, together with TsaE and TsaB. TsaD likely plays a direct catalytic role in this reaction. This Francisella tularensis subsp. holarctica (strain LVS) protein is tRNA N6-adenosine threonylcarbamoyltransferase.